The sequence spans 87 residues: UPF0250 protein KPN78578_06520 (87 aa).

It belongs to the UPF0250 family.

This is UPF0250 protein KPN78578_06520 from Klebsiella pneumoniae subsp. pneumoniae (strain ATCC 700721 / MGH 78578).